Reading from the N-terminus, the 228-residue chain is Outer membrane protein assembly factor BamE (228 aa).

Residues 1-29 (MNPILKGVYSPARLGVVALTLFGILGVTG) form the signal peptide. Cys-30 carries N-palmitoyl cysteine lipidation. Residue Cys-30 is the site of S-diacylglycerol cysteine attachment. Residues 197–228 (DFFGSSKKDPDPQSPQLGPGTLNDVPKPADSK) form a disordered region.

Belongs to the BamE family. As to quaternary structure, part of the Bam complex.

It localises to the cell outer membrane. Its function is as follows. Part of the outer membrane protein assembly complex, which is involved in assembly and insertion of beta-barrel proteins into the outer membrane. The sequence is that of Outer membrane protein assembly factor BamE from Polynucleobacter necessarius subsp. necessarius (strain STIR1).